The primary structure comprises 319 residues: Methionyl-tRNA formyltransferase (319 aa).

A (6S)-5,6,7,8-tetrahydrofolate-binding site is contributed by 116–119 (SLLP).

The protein belongs to the Fmt family.

The enzyme catalyses L-methionyl-tRNA(fMet) + (6R)-10-formyltetrahydrofolate = N-formyl-L-methionyl-tRNA(fMet) + (6S)-5,6,7,8-tetrahydrofolate + H(+). Attaches a formyl group to the free amino group of methionyl-tRNA(fMet). The formyl group appears to play a dual role in the initiator identity of N-formylmethionyl-tRNA by promoting its recognition by IF2 and preventing the misappropriation of this tRNA by the elongation apparatus. The chain is Methionyl-tRNA formyltransferase from Chlorobium phaeovibrioides (strain DSM 265 / 1930) (Prosthecochloris vibrioformis (strain DSM 265)).